A 450-amino-acid polypeptide reads, in one-letter code: Phosphoglucosamine mutase (450 aa).

Ser-102 acts as the Phosphoserine intermediate in catalysis. Residues Ser-102, Asp-243, Asp-245, and Asp-247 each contribute to the Mg(2+) site. Ser-102 carries the post-translational modification Phosphoserine.

The protein belongs to the phosphohexose mutase family. Mg(2+) serves as cofactor. Activated by phosphorylation.

It carries out the reaction alpha-D-glucosamine 1-phosphate = D-glucosamine 6-phosphate. Functionally, catalyzes the conversion of glucosamine-6-phosphate to glucosamine-1-phosphate. The protein is Phosphoglucosamine mutase of Agrobacterium fabrum (strain C58 / ATCC 33970) (Agrobacterium tumefaciens (strain C58)).